A 342-amino-acid polypeptide reads, in one-letter code: Erlin-1 (342 aa).

Residues 1–6 (MAHVGA) lie on the Cytoplasmic side of the membrane. Residues 7–23 (VVAAMAGLMAILLHSSI) traverse the membrane as a helical segment. Over 24–342 (HKIEEGHLAV…ASKPKASEGH (319 aa)) the chain is Lumenal. An N-linked (GlcNAc...) asparagine glycan is attached at Asn-106. The disordered stretch occupies residues 308–342 (SSASRPAAGESEQLESLSMRESLKKASKPKASEGH).

Belongs to the band 7/mec-2 family.

It is found in the endoplasmic reticulum membrane. Functionally, mediates the endoplasmic reticulum-associated degradation (ERAD) of inositol 1,4,5-trisphosphate receptors (IP3Rs). Involved in regulation of cellular cholesterol homeostasis by regulation the SREBP signaling pathway. Binds cholesterol and may promote ER retention of the SCAP-SREBF complex. This is Erlin-1 from Danio rerio (Zebrafish).